We begin with the raw amino-acid sequence, 194 residues long: Leucyl/phenylalanyl-tRNA--protein transferase (194 aa).

The protein belongs to the L/F-transferase family.

It localises to the cytoplasm. The catalysed reaction is N-terminal L-lysyl-[protein] + L-leucyl-tRNA(Leu) = N-terminal L-leucyl-L-lysyl-[protein] + tRNA(Leu) + H(+). It catalyses the reaction N-terminal L-arginyl-[protein] + L-leucyl-tRNA(Leu) = N-terminal L-leucyl-L-arginyl-[protein] + tRNA(Leu) + H(+). The enzyme catalyses L-phenylalanyl-tRNA(Phe) + an N-terminal L-alpha-aminoacyl-[protein] = an N-terminal L-phenylalanyl-L-alpha-aminoacyl-[protein] + tRNA(Phe). Its function is as follows. Functions in the N-end rule pathway of protein degradation where it conjugates Leu, Phe and, less efficiently, Met from aminoacyl-tRNAs to the N-termini of proteins containing an N-terminal arginine or lysine. This chain is Leucyl/phenylalanyl-tRNA--protein transferase, found in Pelodictyon phaeoclathratiforme (strain DSM 5477 / BU-1).